The primary structure comprises 91 residues: DNA-directed RNA polymerase subunit omega (91 aa).

A disordered region spans residues 66–91 (QMPPPLPNFPGAANREATGAEDAAGE).

It belongs to the RNA polymerase subunit omega family. In terms of assembly, the RNAP catalytic core consists of 2 alpha, 1 beta, 1 beta' and 1 omega subunit. When a sigma factor is associated with the core the holoenzyme is formed, which can initiate transcription.

It carries out the reaction RNA(n) + a ribonucleoside 5'-triphosphate = RNA(n+1) + diphosphate. Promotes RNA polymerase assembly. Latches the N- and C-terminal regions of the beta' subunit thereby facilitating its interaction with the beta and alpha subunits. In Acidithiobacillus ferrooxidans (strain ATCC 23270 / DSM 14882 / CIP 104768 / NCIMB 8455) (Ferrobacillus ferrooxidans (strain ATCC 23270)), this protein is DNA-directed RNA polymerase subunit omega.